Reading from the N-terminus, the 89-residue chain is Acylphosphatase (89 aa).

Positions 3-89 constitute an Acylphosphatase-like domain; the sequence is HIHLQVFGRV…NQKLSDFRSI (87 aa). Residues R18 and N36 contribute to the active site.

This sequence belongs to the acylphosphatase family.

The enzyme catalyses an acyl phosphate + H2O = a carboxylate + phosphate + H(+). This is Acylphosphatase (acyP) from Staphylococcus aureus (strain Mu3 / ATCC 700698).